The primary structure comprises 320 residues: Beta-ketoacyl-[acyl-carrier-protein] synthase III (320 aa).

Catalysis depends on residues Cys-113 and His-247. The ACP-binding stretch occupies residues 248–252; the sequence is QANRR. The active site involves Asn-277.

It belongs to the thiolase-like superfamily. FabH family. As to quaternary structure, homodimer.

The protein resides in the cytoplasm. It catalyses the reaction malonyl-[ACP] + acetyl-CoA + H(+) = 3-oxobutanoyl-[ACP] + CO2 + CoA. It functions in the pathway lipid metabolism; fatty acid biosynthesis. Functionally, catalyzes the condensation reaction of fatty acid synthesis by the addition to an acyl acceptor of two carbons from malonyl-ACP. Catalyzes the first condensation reaction which initiates fatty acid synthesis and may therefore play a role in governing the total rate of fatty acid production. Possesses both acetoacetyl-ACP synthase and acetyl transacylase activities. Its substrate specificity determines the biosynthesis of branched-chain and/or straight-chain of fatty acids. The protein is Beta-ketoacyl-[acyl-carrier-protein] synthase III of Acidiphilium cryptum (strain JF-5).